The primary structure comprises 224 residues: UPF0758 protein VCM66_0205 (224 aa).

The segment at 1-20 (MSLKQLPTESMPREKLLQRG) is disordered. In terms of domain architecture, MPN spans 102-224 (ALTSPQQTKL…VVSFAERGWI (123 aa)). His173, His175, and Asp186 together coordinate Zn(2+). The short motif at 173 to 186 (HNHPSGVAEPSQAD) is the JAMM motif element.

The protein belongs to the UPF0758 family.

The protein is UPF0758 protein VCM66_0205 of Vibrio cholerae serotype O1 (strain M66-2).